The sequence spans 521 residues: Zinc finger CCCH domain-containing protein 45 (521 aa).

Disordered regions lie at residues 28–60, 142–185, and 296–319; these read TEDS…GFEG, TPAI…PLCS, and SRSF…ISPP. The span at 34 to 43 shows a compositional bias: polar residues; it reads NVASQPQRHS. Positions 159 to 168 are enriched in low complexity; that stretch reads EESSNSKVES. Polar residues predominate over residues 170–185; it reads VTANKQGQLETKPLCS. The C3H1-type zinc-finger motif lies at 469–497; sequence NKIHQQCIYFGTANGCNMGDSCTYVHDRY.

The sequence is that of Zinc finger CCCH domain-containing protein 45 from Arabidopsis thaliana (Mouse-ear cress).